Consider the following 109-residue polypeptide: Parvalbumin alpha (109 aa).

Serine 1 carries the N-acetylserine modification. 2 consecutive EF-hand domains span residues 38 to 73 and 77 to 109; these read KSDA…FSDG and LNDK…AKMT. Residues aspartate 51, aspartate 53, serine 55, tyrosine 57, glutamate 59, glutamate 62, aspartate 90, aspartate 92, aspartate 94, lysine 96, and glutamate 101 each contribute to the Ca(2+) site.

Belongs to the parvalbumin family. Monomer.

In muscle, parvalbumin is thought to be involved in relaxation after contraction. It binds two calcium ions. The polypeptide is Parvalbumin alpha (Raja clavata (Thornback ray)).